The primary structure comprises 558 residues: Formate--tetrahydrofolate ligase (558 aa).

Thr65–Thr72 is an ATP binding site.

This sequence belongs to the formate--tetrahydrofolate ligase family.

It catalyses the reaction (6S)-5,6,7,8-tetrahydrofolate + formate + ATP = (6R)-10-formyltetrahydrofolate + ADP + phosphate. Its pathway is one-carbon metabolism; tetrahydrofolate interconversion. The polypeptide is Formate--tetrahydrofolate ligase (Methylobacterium nodulans (strain LMG 21967 / CNCM I-2342 / ORS 2060)).